We begin with the raw amino-acid sequence, 185 residues long: Ribosome-recycling factor (185 aa).

The protein belongs to the RRF family.

Its subcellular location is the cytoplasm. Functionally, responsible for the release of ribosomes from messenger RNA at the termination of protein biosynthesis. May increase the efficiency of translation by recycling ribosomes from one round of translation to another. The sequence is that of Ribosome-recycling factor from Campylobacter fetus subsp. fetus (strain 82-40).